Consider the following 155-residue polypeptide: Interleukin-2 (155 aa).

The N-terminal stretch at 1–20 is a signal peptide; that stretch reads MYKIQLLSCIALTLALVANG. A glycan (O-linked (GalNAc...) threonine) is linked at Thr-23. Residues Cys-79 and Cys-127 are joined by a disulfide bond.

It belongs to the IL-2 family.

Its subcellular location is the secreted. Its function is as follows. Cytokine produced by activated CD4-positive helper T-cells and to a lesser extend activated CD8-positive T-cells and natural killer (NK) cells that plays pivotal roles in the immune response and tolerance. Binds to a receptor complex composed of either the high-affinity trimeric IL-2R (IL2RA/CD25, IL2RB/CD122 and IL2RG/CD132) or the low-affinity dimeric IL-2R (IL2RB and IL2RG). Interaction with the receptor leads to oligomerization and conformation changes in the IL-2R subunits resulting in downstream signaling starting with phosphorylation of JAK1 and JAK3. In turn, JAK1 and JAK3 phosphorylate the receptor to form a docking site leading to the phosphorylation of several substrates including STAT5. This process leads to activation of several pathways including STAT, phosphoinositide-3-kinase/PI3K and mitogen-activated protein kinase/MAPK pathways. Functions as a T-cell growth factor and can increase NK-cell cytolytic activity as well. Promotes strong proliferation of activated B-cells and subsequently immunoglobulin production. Plays a pivotal role in regulating the adaptive immune system by controlling the survival and proliferation of regulatory T-cells, which are required for the maintenance of immune tolerance. Moreover, participates in the differentiation and homeostasis of effector T-cell subsets, including Th1, Th2, Th17 as well as memory CD8-positive T-cells. In Bos taurus (Bovine), this protein is Interleukin-2 (IL2).